Consider the following 478-residue polypeptide: Ribulose bisphosphate carboxylase large chain (478 aa).

Positions 1-2 (MS) are excised as a propeptide. Pro-3 is subject to N-acetylproline. Position 14 is an N6,N6,N6-trimethyllysine (Lys-14). Asn-123 and Thr-173 together coordinate substrate. The active-site Proton acceptor is Lys-175. Lys-177 lines the substrate pocket. Lys-201, Asp-203, and Glu-204 together coordinate Mg(2+). Residue Lys-201 is modified to N6-carboxylysine. The Proton acceptor role is filled by His-294. The substrate site is built by Arg-295, His-327, and Ser-379.

Belongs to the RuBisCO large chain family. Type I subfamily. Heterohexadecamer of 8 large chains and 8 small chains; disulfide-linked. The disulfide link is formed within the large subunit homodimers. Mg(2+) is required as a cofactor. Post-translationally, the disulfide bond which can form in the large chain dimeric partners within the hexadecamer appears to be associated with oxidative stress and protein turnover.

The protein localises to the plastid. Its subcellular location is the chloroplast. It carries out the reaction 2 (2R)-3-phosphoglycerate + 2 H(+) = D-ribulose 1,5-bisphosphate + CO2 + H2O. The enzyme catalyses D-ribulose 1,5-bisphosphate + O2 = 2-phosphoglycolate + (2R)-3-phosphoglycerate + 2 H(+). Functionally, ruBisCO catalyzes two reactions: the carboxylation of D-ribulose 1,5-bisphosphate, the primary event in carbon dioxide fixation, as well as the oxidative fragmentation of the pentose substrate in the photorespiration process. Both reactions occur simultaneously and in competition at the same active site. This Neurachne munroi protein is Ribulose bisphosphate carboxylase large chain.